The primary structure comprises 214 residues: ATP-dependent dethiobiotin synthetase BioD (214 aa).

ATP is bound at residue 10–15 (GIGKTY). Residue threonine 14 coordinates Mg(2+). Residue lysine 35 is part of the active site. Threonine 39 is a substrate binding site. Residues aspartate 44, 109 to 112 (EGAG), and 169 to 170 (NC) contribute to the ATP site. 2 residues coordinate Mg(2+): aspartate 44 and glutamate 109.

The protein belongs to the dethiobiotin synthetase family. In terms of assembly, homodimer. Mg(2+) serves as cofactor.

The protein localises to the cytoplasm. The catalysed reaction is (7R,8S)-7,8-diammoniononanoate + CO2 + ATP = (4R,5S)-dethiobiotin + ADP + phosphate + 3 H(+). Its pathway is cofactor biosynthesis; biotin biosynthesis; biotin from 7,8-diaminononanoate: step 1/2. Functionally, catalyzes a mechanistically unusual reaction, the ATP-dependent insertion of CO2 between the N7 and N8 nitrogen atoms of 7,8-diaminopelargonic acid (DAPA, also called 7,8-diammoniononanoate) to form a ureido ring. In Methanocaldococcus jannaschii (strain ATCC 43067 / DSM 2661 / JAL-1 / JCM 10045 / NBRC 100440) (Methanococcus jannaschii), this protein is ATP-dependent dethiobiotin synthetase BioD.